A 1997-amino-acid chain; its full sequence is Receptor-type tyrosine-protein phosphatase beta (1997 aa).

Positions 1 to 22 (MLSHGAGLALWITLSLLQTGLA) are cleaved as a signal peptide. 17 consecutive Fibronectin type-III domains span residues 23–111 (EPER…TDPL), 112–207 (PPAR…SPVK), 203–288 (PSPV…VRTA), 291–378 (EVSN…TFPD), 379–471 (KVAN…LAVL), 467–552 (PLAV…KGRT), 556–641 (QVTD…EGRT), 642–729 (VPSS…QERT), 730–829 (VPDK…TLRN), 819–906 (PEPV…GFTV), 909–1001 (AVKN…VQGV), 995–1083 (PASV…EGRT), 1087–1175 (AVTD…VPAS), 1173–1260 (PASV…SRTA), 1260–1356 (APSP…TKPD), 1357–1448 (KIQN…IDRP), and 1458–1554 (NEKD…EMES). Residues 23–1621 (EPERCNFTLA…ESEPLFGAIE (1599 aa)) lie on the Extracellular side of the membrane. N-linked (GlcNAc...) asparagine glycans are attached at residues Asn28, Asn53, Asn75, Asn172, Asn198, Asn267, Asn321, Asn414, Asn421, Asn479, Asn544, Asn574, Asn598, Asn652, Asn721, and Asn829. 10 N-linked (GlcNAc...) asparagine glycosylation sites follow: Asn1040, Asn1096, Asn1163, Asn1185, Asn1212, Asn1274, Asn1367, Asn1470, Asn1474, and Asn1518. A helical membrane pass occupies residues 1622-1642 (GVSAGLFLIGMLVAVVALLIC). Topologically, residues 1643-1997 (RQKVSHGRER…YHRDPVYSRH (355 aa)) are cytoplasmic. One can recognise a Tyrosine-protein phosphatase domain in the interval 1703–1963 (LSKEYEELKD…VYLHQCVRDV (261 aa)). Substrate is bound by residues Asp1870, 1904-1910 (CSAGVGR), and Gln1948. The active-site Phosphocysteine intermediate is Cys1904. Tyr1981 is subject to Phosphotyrosine.

It belongs to the protein-tyrosine phosphatase family. Receptor class 3 subfamily. As to quaternary structure, monomer. Interacts with TEK. Interacts via fibronectin type-III 17 domain with CDH5. Detected in a complex with CNTN1 and NRCAM. Interacts (phosphorylated form) with FYN and GRB2. Interacts with IGFBP2.

It is found in the membrane. It carries out the reaction O-phospho-L-tyrosyl-[protein] + H2O = L-tyrosyl-[protein] + phosphate. Functionally, plays an important role in blood vessel remodeling and angiogenesis. Not necessary for the initial formation of blood vessels, but is essential for their maintenance and remodeling. Can induce dephosphorylation of TEK/TIE2, CDH5/VE-cadherin and KDR/VEGFR-2. Regulates angiopoietin-TIE2 signaling in endothelial cells. Acts as a negative regulator of TIE2, and controls TIE2 driven endothelial cell proliferation, which in turn affects blood vessel remodeling during embryonic development and determines blood vessel size during perinatal growth. Essential for the maintenance of endothelial cell contact integrity and for the adhesive function of VE-cadherin in endothelial cells and this requires the presence of plakoglobin. The sequence is that of Receptor-type tyrosine-protein phosphatase beta (PTPRB) from Homo sapiens (Human).